The following is a 354-amino-acid chain: S-adenosylmethionine:tRNA ribosyltransferase-isomerase (354 aa).

The protein belongs to the QueA family. In terms of assembly, monomer.

The protein resides in the cytoplasm. The catalysed reaction is 7-aminomethyl-7-carbaguanosine(34) in tRNA + S-adenosyl-L-methionine = epoxyqueuosine(34) in tRNA + adenine + L-methionine + 2 H(+). The protein operates within tRNA modification; tRNA-queuosine biosynthesis. Its function is as follows. Transfers and isomerizes the ribose moiety from AdoMet to the 7-aminomethyl group of 7-deazaguanine (preQ1-tRNA) to give epoxyqueuosine (oQ-tRNA). This is S-adenosylmethionine:tRNA ribosyltransferase-isomerase from Salmonella gallinarum (strain 287/91 / NCTC 13346).